Here is a 536-residue protein sequence, read N- to C-terminus: Protein ST7 homolog (536 aa).

Transmembrane regions (helical) follow at residues 3 to 23 and 49 to 69; these read CSWT…LFAL and FYVA…IFEW. The stretch at 191-218 forms a coiled coil; the sequence is LAEEESETVSQAENLLRRALRAIESTLN. A helical membrane pass occupies residues 465–485; it reads TLMMLLQTFICLAICILAVLA.

This sequence belongs to the ST7 family.

The protein localises to the membrane. The sequence is that of Protein ST7 homolog from Caenorhabditis elegans.